The primary structure comprises 66 residues: Prokaryotic ubiquitin-like protein Pup (66 aa).

The segment covering 1–10 (MAGQEQQSSS) has biased composition (low complexity). Residues 1–39 (MAGQEQQSSSPREEEHEVADAPVPVPSSPQASAHTDGVD) form a disordered region. The tract at residues 23 to 60 (VPVPSSPQASAHTDGVDDLLDEIDGVLESNAEEFVRGF) is ARC ATPase binding. Deamidated glutamine is present on Q66. An Isoglutamyl lysine isopeptide (Gln-Lys) (interchain with K-? in acceptor proteins) cross-link involves residue Q66.

This sequence belongs to the prokaryotic ubiquitin-like protein family. As to quaternary structure, strongly interacts with the proteasome-associated ATPase ARC through a hydrophobic interface; the interacting region of Pup lies in its C-terminal half. There is one Pup binding site per ARC hexamer ring. Is modified by deamidation of its C-terminal glutamine to glutamate by the deamidase Dop, a prerequisite to the subsequent pupylation process.

The protein operates within protein degradation; proteasomal Pup-dependent pathway. In terms of biological role, protein modifier that is covalently attached to lysine residues of substrate proteins, thereby targeting them for proteasomal degradation. The tagging system is termed pupylation. The sequence is that of Prokaryotic ubiquitin-like protein Pup from Renibacterium salmoninarum (strain ATCC 33209 / DSM 20767 / JCM 11484 / NBRC 15589 / NCIMB 2235).